The following is a 248-amino-acid chain: Tropomyosin alpha-4 chain (248 aa).

At Ala2 the chain carries N-acetylalanine. Residues Ala2–Ile248 adopt a coiled-coil conformation. Ser6 is modified (phosphoserine). The interval Ala16–Gly47 is disordered. The span at Arg33–Gly47 shows a compositional bias: basic and acidic residues. 2 positions are modified to N6-acetyllysine: Lys177 and Lys215. The residue at position 216 (Thr216) is a Phosphothreonine.

This sequence belongs to the tropomyosin family. In terms of assembly, homodimer. Heterodimer of an alpha (TPM1, TPM3 or TPM4) and a beta (TPM2) chain.

Its subcellular location is the cytoplasm. The protein resides in the cytoskeleton. Binds to actin filaments in muscle and non-muscle cells. Plays a central role, in association with the troponin complex, in the calcium dependent regulation of vertebrate striated muscle contraction. Smooth muscle contraction is regulated by interaction with caldesmon. In non-muscle cells is implicated in stabilizing cytoskeleton actin filaments. Binds calcium. The polypeptide is Tropomyosin alpha-4 chain (TPM4) (Equus caballus (Horse)).